The primary structure comprises 360 residues: Protein Wnt-2 (360 aa).

A signal peptide spans 1–25 (MNAPLGGIWLWLPLLLTWLTPEVNS). Intrachain disulfides connect Cys-76–Cys-87, Cys-127–Cys-135, Cys-137–Cys-157, Cys-206–Cys-220, Cys-208–Cys-215, Cys-278–Cys-309, Cys-294–Cys-304, Cys-308–Cys-348, Cys-324–Cys-339, Cys-326–Cys-336, and Cys-331–Cys-332. A lipid anchor (O-palmitoleoyl serine; by PORCN) is attached at Ser-212. The N-linked (GlcNAc...) asparagine glycan is linked to Asn-295.

Belongs to the Wnt family. Palmitoleoylation is required for efficient binding to frizzled receptors. Depalmitoleoylation leads to Wnt signaling pathway inhibition. As to expression, expressed in brain in the thalamus, in fetal and adult lung and in placenta.

It localises to the secreted. It is found in the extracellular space. The protein localises to the extracellular matrix. Its function is as follows. Ligand for members of the frizzled family of seven transmembrane receptors. Functions in the canonical Wnt signaling pathway that results in activation of transcription factors of the TCF/LEF family. Functions as a upstream regulator of FGF10 expression. Plays an important role in embryonic lung development. May contribute to embryonic brain development by regulating the proliferation of dopaminergic precursors and neurons. The sequence is that of Protein Wnt-2 (WNT2) from Homo sapiens (Human).